The sequence spans 408 residues: MKKAAIITVGSELLEGLILNRNAQFLCQELKNLGYRVIKVSTVGDHLEDIAEEVRSLLPEVHLLILTGGLGPTKDDLTREAVAKALNRKLLLDYNLKTKIEEKVKKYHSKIPSNIEKQALVIEGAKVIDNPVGSAPGQLLEVDGKKVILLPGPPKELIPMFESLKELLKTPHAFYQVVLKYYSIPEAVLEDLLKEILYSQDRVEVATMADHVEGVRLRLTTSAEHREFLDELVEKILEKTGEYLYGMNDEKMEEVVVRLLKENKKTLAVAESCTGGMLSSLVVNVPGASDVFIGGVVAYSNELKKSILGVKEDTLRKYGAVSEQCVQEMTEGLKKLTEADICVAISGIAGPSGGTPTKPVGTVFIDLFEQNHSTVRYNFSGDRNTIRTRSAMMALENLRKHLKERGRS.

It belongs to the CinA family.

The chain is CinA-like protein from Thermotoga neapolitana (strain ATCC 49049 / DSM 4359 / NBRC 107923 / NS-E).